The sequence spans 403 residues: S-adenosylmethionine synthase (403 aa).

H15 contacts ATP. D17 lines the Mg(2+) pocket. E43 is a binding site for K(+). L-methionine contacts are provided by E56 and Q99. The segment at 99-109 (QSPDINQGVDR) is flexible loop. Residues 166–168 (DAK), 232–233 (KF), D241, 247–248 (RK), A264, and K268 each bind ATP. An L-methionine-binding site is contributed by D241. Residue K272 participates in L-methionine binding.

It belongs to the AdoMet synthase family. Homotetramer; dimer of dimers. The cofactor is Mg(2+). Requires K(+) as cofactor.

The protein localises to the cytoplasm. It catalyses the reaction L-methionine + ATP + H2O = S-adenosyl-L-methionine + phosphate + diphosphate. The protein operates within amino-acid biosynthesis; S-adenosyl-L-methionine biosynthesis; S-adenosyl-L-methionine from L-methionine: step 1/1. Catalyzes the formation of S-adenosylmethionine (AdoMet) from methionine and ATP. The overall synthetic reaction is composed of two sequential steps, AdoMet formation and the subsequent tripolyphosphate hydrolysis which occurs prior to release of AdoMet from the enzyme. The chain is S-adenosylmethionine synthase from Xanthomonas axonopodis pv. citri (strain 306).